The sequence spans 145 residues: Transcription antitermination protein NusB (145 aa).

Belongs to the NusB family.

In terms of biological role, involved in transcription antitermination. Required for transcription of ribosomal RNA (rRNA) genes. Binds specifically to the boxA antiterminator sequence of the ribosomal RNA (rrn) operons. This is Transcription antitermination protein NusB from Citrifermentans bemidjiense (strain ATCC BAA-1014 / DSM 16622 / JCM 12645 / Bem) (Geobacter bemidjiensis).